A 315-amino-acid chain; its full sequence is Salivary protein SG34 (315 aa).

An N-terminal signal peptide occupies residues 1–20 (MPVSYDFVILLALFIVLARS). Residues 98–161 (NAEVELLRES…QEEIEQQTKQ (64 aa)) adopt a coiled-coil conformation.

In terms of biological role, (Microbial infection) Modulates replication of duck Tembusu virus in salivary glands and virus release into the saliva, probably via the regulation of antimicrobial peptides expression in response to duck Tembusu virus infection. The polypeptide is Salivary protein SG34 (Aedes albopictus (Asian tiger mosquito)).